The following is an 88-amino-acid chain: UPF0250 protein Swoo_3713 (88 aa).

This sequence belongs to the UPF0250 family.

The sequence is that of UPF0250 protein Swoo_3713 from Shewanella woodyi (strain ATCC 51908 / MS32).